We begin with the raw amino-acid sequence, 384 residues long: G protein-coupled receptor 88 (384 aa).

The Extracellular segment spans residues 1 to 35 (MTNSSSTSTSTTTGGSLLLLCEEEESWAGRRIPVS). Asn-3 carries an N-linked (GlcNAc...) asparagine glycan. A helical transmembrane segment spans residues 36 to 56 (LLYSGLAIGGTLANGMVIYLV). The Cytoplasmic segment spans residues 57 to 73 (SSFRKLQTTSNAFIVNG). Residues 74 to 94 (CAADLSVCALWMPQEAVLGLL) traverse the membrane as a helical segment. Over 95–116 (PAGSAEPPGDWDSGGGSYRLLR) the chain is Extracellular. The helical transmembrane segment at 117–136 (GGLLGLGLTVSLLSHCLVAL) threads the bilayer. Topologically, residues 137–158 (NRYLLITRAPATYQVLYQRRHT) are cytoplasmic. The helical transmembrane segment at 159–179 (AGMLALSWALALGLVLLLPPW) threads the bilayer. Residues 180 to 195 (APKPGAEPPQVHYPAL) lie on the Extracellular side of the membrane. A helical transmembrane segment spans residues 196–216 (LAAGALLAQTALLLHCYLGIV). The Cytoplasmic segment spans residues 217 to 285 (RRVRVSVKRV…RAQRRLSGLS (69 aa)). Residues 286 to 306 (VLLLCCVFLLATQPLVWVSLA) form a helical membrane-spanning segment. The Extracellular portion of the chain corresponds to 307-310 (SGFS). Residues 311–331 (LPVPWGVQAASWLLCCALSAL) traverse the membrane as a helical segment. Residues 332-384 (NPLLYTWRNEEFRRSVRSVLPGVGDAAAAAAAATAVPAMSQAQLGTRAAGQHW) are Cytoplasmic-facing.

The protein belongs to the G-protein coupled receptor 1 family. As to expression, expressed predominantly in the striatum. Expressed also in olfactory tubercle, nucleus accumbens, amygdala, and neocortex. Spinal cord, pons, and medulla expression remains discrete. Also expressed in peripheral tissues, including adrenal cortex (16 dpc to 21 dpc) and cochlear ganglia (19 dpc to P3) and also at moderate levels in retina (18 dpc to 19 dpc) and spleen (21 dpc to P7).

The protein resides in the cell membrane. Its subcellular location is the cell projection. It localises to the cilium membrane. It is found in the cytoplasm. The protein localises to the nucleus. Its function is as follows. Orphan G protein-coupled receptor implicated in a large repertoire of behavioral responses that engage motor activities, spatial learning, and emotional processing. May play a role in the regulation of cognitive and motor function. Couples with the heterotrimeric G protein complex of the G(i) subfamily, consisting of GNAI1, GNB1 and GNG2, thereby acting through a G(i)-mediated pathway. Plays a role in the attenuation of D1 dopamine receptor (D1R)-mediated cAMP response in ciliated cells. In non-ciliated cells, involved in the inhibition of the beta-2 adrenergic receptor (B2AR) response. In Rattus norvegicus (Rat), this protein is G protein-coupled receptor 88 (Gpr88).